Reading from the N-terminus, the 241-residue chain is Carboxy-S-adenosyl-L-methionine synthase (241 aa).

S-adenosyl-L-methionine contacts are provided by residues Tyr38, 63–65 (GCS), 88–89 (DN), 116–117 (DI), Asn131, and Arg198.

It belongs to the class I-like SAM-binding methyltransferase superfamily. Cx-SAM synthase family. As to quaternary structure, homodimer.

It carries out the reaction prephenate + S-adenosyl-L-methionine = carboxy-S-adenosyl-L-methionine + 3-phenylpyruvate + H2O. Functionally, catalyzes the conversion of S-adenosyl-L-methionine (SAM) to carboxy-S-adenosyl-L-methionine (Cx-SAM). This chain is Carboxy-S-adenosyl-L-methionine synthase, found in Pasteurella multocida (strain Pm70).